We begin with the raw amino-acid sequence, 347 residues long: F-box/LRR-repeat/kelch-repeat protein At2g27520 (347 aa).

Residues 1-50 (MVRLDLPWDLVDEILSRLPATSLGRLRFTCKRWNALFKDPEFITKQFHKA) form the F-box domain. LRR repeat units follow at residues 59 to 82 (LSNF…EIAQ), 152 to 177 (CKLV…NVEK), 196 to 220 (KFNI…LYQD), and 261 to 285 (LSWS…ILRI). The stretch at 138–187 (KSYDSYKILRITYGCKLVEIFELKSNSWRVLSKVHPNVEKHYYGGVSFKG) is one Kelch 1 repeat. A Kelch 2 repeat occupies 306–347 (MIYIVGKNGFKKLSYEKDRSNLWRLPFFFSYVPSLVGLYPPM).

This Arabidopsis thaliana (Mouse-ear cress) protein is F-box/LRR-repeat/kelch-repeat protein At2g27520.